The primary structure comprises 125 residues: Small ribosomal subunit protein eS8 (125 aa).

It belongs to the eukaryotic ribosomal protein eS8 family. In terms of assembly, part of the 30S ribosomal subunit.

The chain is Small ribosomal subunit protein eS8 from Methanosarcina mazei (strain ATCC BAA-159 / DSM 3647 / Goe1 / Go1 / JCM 11833 / OCM 88) (Methanosarcina frisia).